Reading from the N-terminus, the 258-residue chain is Pimeloyl-[acyl-carrier protein] methyl ester esterase (258 aa).

Substrate is bound by residues tryptophan 22, 84 to 85 (SL), and 145 to 149 (FLAIQ). The active-site Nucleophile is serine 84. Catalysis depends on residues aspartate 209 and histidine 238. Histidine 238 serves as a coordination point for substrate.

It belongs to the AB hydrolase superfamily. Carboxylesterase BioH family. In terms of assembly, monomer.

The protein localises to the cytoplasm. The catalysed reaction is 6-carboxyhexanoyl-[ACP] methyl ester + H2O = 6-carboxyhexanoyl-[ACP] + methanol + H(+). It participates in cofactor biosynthesis; biotin biosynthesis. In terms of biological role, the physiological role of BioH is to remove the methyl group introduced by BioC when the pimeloyl moiety is complete. It allows to synthesize pimeloyl-ACP via the fatty acid synthetic pathway through the hydrolysis of the ester bonds of pimeloyl-ACP esters. The sequence is that of Pimeloyl-[acyl-carrier protein] methyl ester esterase from Pseudoalteromonas atlantica (strain T6c / ATCC BAA-1087).